We begin with the raw amino-acid sequence, 368 residues long: F-box only protein 28 (368 aa).

Positions Met1–Glu11 are enriched in basic and acidic residues. The interval Met1–Asp56 is disordered. Gly residues predominate over residues Glu12–Gly21. The segment covering Ser22–Arg31 has biased composition (low complexity). Positions Gln32–Pro41 are enriched in pro residues. Low complexity predominate over residues Gln42–Asp56. An F-box domain is found at Asn61 to Val109. Phosphoserine is present on residues Ser235 and Ser242. A Phosphothreonine modification is found at Thr270. The disordered stretch occupies residues Met328 to Lys368. A compositionally biased stretch (low complexity) spans Gly333–Glu342. Position 344 is a phosphoserine (Ser344).

In terms of assembly, part of a SCF (SKP1-cullin-F-box) protein ligase complex.

Its subcellular location is the chromosome. It localises to the centromere. It is found in the kinetochore. Functionally, probably recognizes and binds to some phosphorylated proteins and promotes their ubiquitination and degradation. This chain is F-box only protein 28 (FBXO28), found in Homo sapiens (Human).